The sequence spans 302 residues: tRNA pseudouridine synthase B (302 aa).

Asp-43 serves as the catalytic Nucleophile.

This sequence belongs to the pseudouridine synthase TruB family. Type 1 subfamily.

The catalysed reaction is uridine(55) in tRNA = pseudouridine(55) in tRNA. In terms of biological role, responsible for synthesis of pseudouridine from uracil-55 in the psi GC loop of transfer RNAs. This is tRNA pseudouridine synthase B from Burkholderia mallei (strain NCTC 10247).